A 73-amino-acid chain; its full sequence is Large ribosomal subunit protein bL31 (73 aa).

Belongs to the bacterial ribosomal protein bL31 family. Type A subfamily. In terms of assembly, part of the 50S ribosomal subunit.

Functionally, binds the 23S rRNA. This is Large ribosomal subunit protein bL31 from Agrobacterium fabrum (strain C58 / ATCC 33970) (Agrobacterium tumefaciens (strain C58)).